Consider the following 119-residue polypeptide: Anamorsin homolog (119 aa).

The disordered stretch occupies residues 33–119 (LKQATKGEDC…KVKLNLTDDI (87 aa)). Residues C42, C49, C52, and C54 each contribute to the [2Fe-2S] cluster site. A fe-S binding site A region spans residues 42–54 (CTTRRRACKNCVC). Positions 81, 84, 92, and 95 each coordinate [4Fe-4S] cluster. Short sequence motifs (cx2C motif) lie at residues 81 to 84 (CGNC) and 92 to 95 (CANC). Residues 81-95 (CGNCAKGDAFRCANC) are fe-S binding site B.

The protein belongs to the anamorsin family. In terms of assembly, monomer. The cofactor is [2Fe-2S] cluster. [4Fe-4S] cluster is required as a cofactor.

Its subcellular location is the cytoplasm. The protein resides in the mitochondrion intermembrane space. Functionally, component of the cytosolic iron-sulfur (Fe-S) protein assembly (CIA) machinery. Required for the maturation of extramitochondrial Fe-S proteins. Part of an electron transfer chain functioning in an early step of cytosolic Fe-S biogenesis, facilitating the de novo assembly of a [4Fe-4S] cluster on the cytosolic Fe-S scaffold complex. Electrons are transferred from NADPH via a FAD- and FMN-containing diflavin oxidoreductase. Together with the diflavin oxidoreductase, also required for the assembly of the diferric tyrosyl radical cofactor of ribonucleotide reductase (RNR), probably by providing electrons for reduction during radical cofactor maturation in the catalytic small subunit. The chain is Anamorsin homolog from Leishmania braziliensis.